A 683-amino-acid chain; its full sequence is Synaptic vesicle glycoprotein 2B (683 aa).

Residues 1-10 are compositionally biased toward basic and acidic residues; that stretch reads MDDYRYRDNY. A disordered region spans residues 1–73; it reads MDDYRYRDNY…TKMAPSRADG (73 aa). Residues 1 to 110 are Cytoplasmic-facing; the sequence is MDDYRYRDNY…ECGHGRFQWT (110 aa). A Phosphoserine modification is found at serine 33. Threonine 36 bears the Phosphothreonine mark. A helical transmembrane segment spans residues 111–131; it reads LFFVLGLALMADGVEIFVVSF. Over 132 to 148 the chain is Extracellular; it reads ALPSAEKDMCLSSSKKG. A helical transmembrane segment spans residues 149–169; that stretch reads MLGLIVYLGMMAGAFILGGLA. At 170-182 the chain is on the cytoplasmic side; the sequence is DKLGRKKVLSMSL. Residues 183 to 203 form a helical membrane-spanning segment; that stretch reads AINASFASLSSFVQGYGAFLF. The Extracellular segment spans residues 204 to 205; sequence CR. A helical membrane pass occupies residues 206–226; it reads LISGIGIGGSLPIVFAYFSEF. Residues 227–237 lie on the Cytoplasmic side of the membrane; sequence LSREKRGEHLS. Residues 238-258 form a helical membrane-spanning segment; it reads WLGIFWMTGGIYASAMAWSII. Over 259-277 the chain is Extracellular; it reads PHYGWGFSMGTNYHFHSWR. A helical transmembrane segment spans residues 278–298; the sequence is VFVIVCALPATVSMVALKFMP. The Cytoplasmic portion of the chain corresponds to 299–390; sequence ESPRFLLEMG…CVMGPYRMNT (92 aa). The chain crosses the membrane as a helical span at residues 391 to 411; that stretch reads LILAVVWFTMALSYYGLTVWF. The Extracellular portion of the chain corresponds to 412–535; the sequence is PDMIRYFQDE…CHMDFEEDND (124 aa). At tyrosine 423 the chain carries Phosphotyrosine. Residues asparagine 441, asparagine 491, and asparagine 516 are each glycosylated (N-linked (GlcNAc...) asparagine). The helical transmembrane segment at 536 to 556 threads the bilayer; the sequence is FLIYLVSFLGSLSVLPGNIIS. Over 557–565 the chain is Cytoplasmic; the sequence is ALLMDRIGR. The helical transmembrane segment at 566–586 threads the bilayer; it reads LKMIGGSMLISAVCCFFLFFG. At 587–592 the chain is on the extracellular side; it reads NSESAM. A helical transmembrane segment spans residues 593 to 613; it reads IGWQCLFCGTSIAAWNALDVI. Residues 614–626 are Cytoplasmic-facing; the sequence is TVELYPTNQRATA. The helical transmembrane segment at 627 to 649 threads the bilayer; the sequence is FGILNGLCKFGAILGNTIFASFV. Residues 650–653 are Extracellular-facing; it reads GITK. Residues 654–672 form a helical membrane-spanning segment; that stretch reads VVPILLAAASLVGGGLIAL. Over 673-683 the chain is Cytoplasmic; it reads RLPETREQVLM.

It belongs to the major facilitator superfamily. Interacts with SYT1 in a calcium-independent manner. Forms a complex with SYT1, syntaxin-1 and SNAP25. As to quaternary structure, (Microbial infection) Interacts with C.botulinum neurotoxin type A (BoNT/A, botA). In terms of assembly, (Microbial infection) Interacts with C.botulinum neurotoxin type D (BoNT/D, botD). No evidence for its interaction with BoNT/D has also been published. Post-translationally, N-glycosylated. In terms of processing, the N-terminal cytoplasmic domain is phosphorylated by CK1. In terms of tissue distribution, expressed in ribbon synapses of the retina (at protein level). Expressed in diaphragm motor nerve terminals (at protein level). Expressed in hippocampus neurons (at protein level).

Its subcellular location is the cytoplasmic vesicle. It is found in the secretory vesicle. The protein resides in the synaptic vesicle membrane. It localises to the acrosome. In terms of biological role, probably plays a role in the control of regulated secretion in neural and endocrine cells. (Microbial infection) Receptor for C.botulinum neurotoxin type A (BoNT/A, botA); the toxin probably binds via extracellular loop 4. Functionally, (Microbial infection) Possible receptor for C.botulinum neurotoxin type D (BoNT/D, botD). Not a receptor for C.botulinum neurotoxin type D (BoNT/D, botD). Its function is as follows. (Microbial infection) Receptor for C.botulinum neurotoxin type E (BoNT/E); the toxin probably binds via extracellular loop 4. It probably requires glycosylation of Asn-516. This Mus musculus (Mouse) protein is Synaptic vesicle glycoprotein 2B (Sv2b).